Reading from the N-terminus, the 721-residue chain is Dipeptidyl-peptidase 5 (721 aa).

Residues 1–18 (MGAFRWLSIAAAASTALA) form the signal peptide. Residues Asn-75, Asn-94, Asn-151, and Asn-254 are each glycosylated (N-linked (GlcNAc...) asparagine). The interval 271 to 297 (ARPINGPDSPGTPKGIKGDSSSPVFSP) is disordered. Residues Asn-380 and Asn-450 are each glycosylated (N-linked (GlcNAc...) asparagine). Catalysis depends on Ser-560, which acts as the Charge relay system. Asn-607 is a glycosylation site (N-linked (GlcNAc...) asparagine). Active-site charge relay system residues include Asp-643 and His-675.

This sequence belongs to the peptidase S9C family. In terms of processing, N-glycosylated. In terms of tissue distribution, expressed in mycelia and conidia.

Its subcellular location is the secreted. Its function is as follows. May be involved in metabolism of dipeptides or may affect host defense mechanisms. Has a substrate specificity limited to the hydrolysis of X-Ala, His-Ser, and Ser-Tyr dipeptides at a neutral pH optimum. The sequence is that of Dipeptidyl-peptidase 5 from Aspergillus fumigatus (strain CBS 144.89 / FGSC A1163 / CEA10) (Neosartorya fumigata).